Here is a 451-residue protein sequence, read N- to C-terminus: MILLAKFRNLYSKSRANDTISEGDKPEKATGDLEAGRNRLVSMEVGMGNDEVVSSGSGNSAHGRSISPSPSSASHGDPLLPVAENWCHTQVKVVKFNYMWTINNFSFCREEMGEVLKSSTFSAGCNDKLKWCLRINPKGLDEESRDYLSLYLLLVQCNKSEVRAKFKFSILNAKREETKAMESQRAYRFVQGKDWGFKKFIRRDFLLDEANGLLPGDRLSIFCEVSVVAETVNVTGQTNVSQLFKVPPCRLADDMYGLFDNKQFSDFTLVCKSDLGSPTQTFHIHKAILAARSRVFSAMFEHHMQESDTNMTTVDDIEPEVMRELLVYMYTGQTKYIEQMAQSLIAAADKYQLDRLKVMCEQALCYQLTTDNASLTLMLADMYSASQLRAHSINFINVNANEVMDTEGWEDLVRDHPKLLEEVFRALATQQTPPVVLVQPPKKRPKHNCPY.

Positions 51–75 (EVVSSGSGNSAHGRSISPSPSSASH) are disordered. The segment covering 60–75 (SAHGRSISPSPSSASH) has biased composition (low complexity). The MATH domain occupies 95-225 (KFNYMWTINN…GDRLSIFCEV (131 aa)). The 74-residue stretch at 265–338 (SDFTLVCKSD…MYTGQTKYIE (74 aa)) folds into the BTB domain.

The protein belongs to the Tdpoz family.

It is found in the nucleus. The protein resides in the nucleus speckle. Its pathway is protein modification; protein ubiquitination. In terms of biological role, mediates ubiquitination and proteasomal degradation of target proteins, most likely in complex with cul-3. May promote the degradation of bromodomain-containing proteins such as bet-1. The chain is Speckle-type POZ protein homolog from Caenorhabditis elegans.